The chain runs to 396 residues: Elongation factor Tu (396 aa).

Residues 10–206 (KPHVNVGTIG…ALDNYIPLPE (197 aa)) enclose the tr-type G domain. Positions 19–26 (GHVDHGKT) are G1. 19-26 (GHVDHGKT) provides a ligand contact to GTP. A Mg(2+)-binding site is contributed by threonine 26. Residues 60–64 (GITIN) form a G2 region. The G3 stretch occupies residues 81 to 84 (DCPG). GTP is bound by residues 81–85 (DCPGH) and 136–139 (NKCD). The segment at 136 to 139 (NKCD) is G4. The G5 stretch occupies residues 174–176 (SAK).

Belongs to the TRAFAC class translation factor GTPase superfamily. Classic translation factor GTPase family. EF-Tu/EF-1A subfamily. As to quaternary structure, monomer.

The protein resides in the cytoplasm. The enzyme catalyses GTP + H2O = GDP + phosphate + H(+). Its function is as follows. GTP hydrolase that promotes the GTP-dependent binding of aminoacyl-tRNA to the A-site of ribosomes during protein biosynthesis. The polypeptide is Elongation factor Tu (Polaromonas naphthalenivorans (strain CJ2)).